A 192-amino-acid polypeptide reads, in one-letter code: Signal peptidase complex catalytic subunit SEC11C (192 aa).

The Cytoplasmic portion of the chain corresponds to 1-28 (MVRAGAVGTHLPTSSLDIFGDLRKMNKR). The chain crosses the membrane as a helical; Signal-anchor for type II membrane protein span at residues 29–48 (QLYYQVLNFAMIVSSALMIW). Topologically, residues 49–192 (KGLIVLTGSE…GAYVLLKRES (144 aa)) are lumenal. Catalysis depends on charge relay system residues S68, H108, and D134. Residues 177–188 (ALLAVMGAYVLL) are C-terminal short (CTS) helix.

Belongs to the peptidase S26B family. In terms of assembly, component of the signal peptidase complex paralog C (SPC-C) composed of a catalytic subunit SEC11C and three accessory subunits SPCS1, SPCS2 and SPCS3. Within the complex, interacts with SPCS2 and SPCS3. The complex induces a local thinning of the ER membrane which is used to measure the length of the signal peptide (SP) h-region of protein substrates. This ensures the selectivity of the complex towards h-regions shorter than 18-20 amino acids. May undergo processing at the N-terminus.

It is found in the endoplasmic reticulum membrane. The catalysed reaction is Cleavage of hydrophobic, N-terminal signal or leader sequences from secreted and periplasmic proteins.. Its function is as follows. Catalytic component of the signal peptidase complex (SPC) which catalyzes the cleavage of N-terminal signal sequences from nascent proteins as they are translocated into the lumen of the endoplasmic reticulum. Specifically cleaves N-terminal signal peptides that contain a hydrophobic alpha-helix (h-region) shorter than 18-20 amino acids. This chain is Signal peptidase complex catalytic subunit SEC11C (Sec11c), found in Mus musculus (Mouse).